We begin with the raw amino-acid sequence, 597 residues long: Golgin subfamily A member 8C (597 aa).

Disordered stretches follow at residues 1-80 (MAEE…VPDS) and 96-120 (KQQK…QKAE). The segment covering 38-50 (TNGSIHETATSGG) has biased composition (polar residues). A compositionally biased stretch (low complexity) spans 53–70 (SPGDSSSTSSSLHAPQSP). Coiled-coil stretches lie at residues 81–141 (RSVK…NTDL), 199–255 (EWKL…SQEV), and 296–394 (SEVE…GKRL). Basic and acidic residues predominate over residues 100-120 (KQVEHQLEEEKKANNEKQKAE). 3 disordered regions span residues 390–422 (LGKR…SGFM), 457–498 (PITK…GVAA), and 549–576 (PVQG…QEHP). The span at 470 to 483 (PGGGHHQAGPGQGG) shows a compositional bias: gly residues. A compositionally biased stretch (basic and acidic residues) spans 553–563 (ETREGSPHDKP).

The protein belongs to the GOLGA8 family.

The protein is Golgin subfamily A member 8C (GOLGA8CP) of Homo sapiens (Human).